Reading from the N-terminus, the 109-residue chain is V-type proton ATPase 16 kDa proteolipid subunit (109 aa).

A helical transmembrane segment spans residues 1-20 (VPVVMAGVLGIYGLIIAVII). The Lumenal portion of the chain corresponds to 21–39 (STGINPKAKPYYLFDGYAH). A helical transmembrane segment spans residues 40 to 61 (LSSGLACGLAGLAAGMAIGIVG). Residues 62-73 (DAGVRANAQQPK) lie on the Cytoplasmic side of the membrane. The helical transmembrane segment at 74–99 (LFVGMILILIFAEALALYGLIVGIIL) threads the bilayer. Topologically, residues 100 to 109 (SSRAGQSRAD) are lumenal.

It belongs to the V-ATPase proteolipid subunit family. V-ATPase is a heteromultimeric enzyme composed of a peripheral catalytic V1 complex (main components: subunits A, B, C, D, E, and F) attached to an integral membrane V0 proton pore complex (main component: the proteolipid protein; which is present as a hexamer that forms the proton-conducting pore). In terms of tissue distribution, high expression in the mesocotyl tip of etiolated seedlings compared to the base.

It is found in the vacuole membrane. Its function is as follows. Proton-conducting pore forming subunit of the membrane integral V0 complex of vacuolar ATPase. V-ATPase is responsible for acidifying a variety of intracellular compartments in eukaryotic cells. The protein is V-type proton ATPase 16 kDa proteolipid subunit of Zea mays (Maize).